The chain runs to 186 residues: ADP-ribosylation factor-like protein 6 (186 aa).

A lipid anchor (N-myristoyl glycine) is attached at Gly2. GTP contacts are provided by residues 24-31 (GLDNSGKT), Thr50, 69-73 (DMSGQ), Gly72, 130-133 (NKMD), and Ala164. Mg(2+) is bound at residue Thr50.

It belongs to the small GTPase superfamily. Arf family. Interacts with SEC61B, ARL6IP1, ARL6IP2, ARL6IP3, ARL6IP4 ARL6IP5 and ARL6IP6. Interacts (GTP-bound form) with the BBSome a complex that contains BBS1, BBS2, BBS4, BBS5, BBS7, BBS8/TTC8, BBS9 and BBIP10. Interacts (GTP-free form) with IFT27.

The protein localises to the cell projection. It is found in the cilium membrane. Its subcellular location is the cytoplasm. The protein resides in the cytoskeleton. It localises to the cilium axoneme. The protein localises to the cilium basal body. Functionally, involved in membrane protein trafficking at the base of the ciliary organelle. Mediates recruitment onto plasma membrane of the BBSome complex which would constitute a coat complex required for sorting of specific membrane proteins to the primary cilia. Together with the BBSome complex and LTZL1, controls SMO ciliary trafficking and contributes to the sonic hedgehog (SHH) pathway regulation. May regulate cilia assembly and disassembly and subsequent ciliary signaling events such as the Wnt signaling cascade. Isoform 2 may be required for proper retinal function and organization. The protein is ADP-ribosylation factor-like protein 6 (ARL6) of Pongo abelii (Sumatran orangutan).